We begin with the raw amino-acid sequence, 305 residues long: MAQRLPWRFVAEWTSEGEMVLREVKRIYAAGATRYQEYMIAELAGIGKALVLDGKVQSSILDEHWYHEALVHPILLAHQCPRKVLVIGGGEGATVREVLRHSCVEHVTMVDIDEELVELAKKHLAEWHQGAFSSDKLELVIGDGRRYVENCHRKYDAIILDLVDPMEGGPAARLYTLEFYRAVKGCLRPGGAVVTQATSPTLSPRVYAVIRNTLAKVFTIVRPYVSYVRSYNGLWGFVAASDTVDPAKLSAKEVDELIAARIRGQLRFYDGETHEWMFRLPLPVRQVLSETRDYATDEKPVYVPV.

The PABS domain maps to W7–D242. Residue Q36 participates in S-methyl-5'-thioadenosine binding. The spermidine site is built by H67 and E91. S-methyl-5'-thioadenosine is bound by residues D111 and D143–G144. D161 functions as the Proton acceptor in the catalytic mechanism. Residue P170 participates in S-methyl-5'-thioadenosine binding.

This sequence belongs to the spermidine/spermine synthase family. Homodimer or homotetramer.

It is found in the cytoplasm. It carries out the reaction S-adenosyl 3-(methylsulfanyl)propylamine + propane-1,3-diamine = norspermidine + S-methyl-5'-thioadenosine + H(+). In terms of biological role, involved in the biosynthesis of polyamines which are thought to support the growth of thermophilic microorganisms under high-temperature conditions. It seems that long-chain and branched-chain of polyamines effectively stabilize DNA and RNA, respectively. Catalyzes the irreversible transfer of a propylamine group from the amino donor S-adenosylmethioninamine (decarboxy-AdoMet) to 1,3-diaminopropane to yield sym-norspermidine (bis(3-aminopropyl)amine). It can also synthesize thermospermine from spermidine with a very low activity. The protein is Polyamine aminopropyltransferase 2 of Hyperthermus butylicus (strain DSM 5456 / JCM 9403 / PLM1-5).